The chain runs to 634 residues: UPF0313 protein PG_0934 (634 aa).

One can recognise a Radical SAM core domain in the interval 302 to 582 (AYEMIKHSVN…RQHMFFFWYK (281 aa)). The [4Fe-4S] cluster site is built by Cys316, Cys320, and Cys323. Positions 607-634 (DRTTSSRNDRHTPPSTQPRKSKSKSRHS) are disordered. Over residues 625 to 634 (RKSKSKSRHS) the composition is skewed to basic residues.

The protein belongs to the UPF0313 family. [4Fe-4S] cluster serves as cofactor.

The chain is UPF0313 protein PG_0934 from Porphyromonas gingivalis (strain ATCC BAA-308 / W83).